The primary structure comprises 95 residues: Large ribosomal subunit protein uL23 (95 aa).

It belongs to the universal ribosomal protein uL23 family. Part of the 50S ribosomal subunit. Contacts protein L29, and trigger factor when it is bound to the ribosome.

One of the early assembly proteins it binds 23S rRNA. One of the proteins that surrounds the polypeptide exit tunnel on the outside of the ribosome. Forms the main docking site for trigger factor binding to the ribosome. The chain is Large ribosomal subunit protein uL23 from Bacillus pumilus (strain SAFR-032).